The chain runs to 386 residues: Phosphate acyltransferase (386 aa).

Residues 359–386 (PHRARQDELGENKVVGADQSMTAKATGT) are disordered. Over residues 377–386 (QSMTAKATGT) the composition is skewed to polar residues.

This sequence belongs to the PlsX family. Homodimer. Probably interacts with PlsY.

It is found in the cytoplasm. It catalyses the reaction a fatty acyl-[ACP] + phosphate = an acyl phosphate + holo-[ACP]. The protein operates within lipid metabolism; phospholipid metabolism. Functionally, catalyzes the reversible formation of acyl-phosphate (acyl-PO(4)) from acyl-[acyl-carrier-protein] (acyl-ACP). This enzyme utilizes acyl-ACP as fatty acyl donor, but not acyl-CoA. This Beijerinckia indica subsp. indica (strain ATCC 9039 / DSM 1715 / NCIMB 8712) protein is Phosphate acyltransferase.